The following is a 92-amino-acid chain: Kinetoplastid membrane protein 11 (92 aa).

It belongs to the KMP-11 family. As to quaternary structure, monomer.

The protein resides in the cytoplasm. Its subcellular location is the cytoskeleton. May be involved in the regulation of the cytoskeleton through interaction with the subpellicular microtubules. May be involved in parasite mobility and attachment to the surface of the host cell. Behaves as a strong immunogen during infection. The protein is Kinetoplastid membrane protein 11 (KMP-11/1) of Trypanosoma brucei brucei.